We begin with the raw amino-acid sequence, 163 residues long: Large ribosomal subunit protein uL10 (163 aa).

The protein belongs to the universal ribosomal protein uL10 family. In terms of assembly, part of the ribosomal stalk of the 50S ribosomal subunit. The N-terminus interacts with L11 and the large rRNA to form the base of the stalk. The C-terminus forms an elongated spine to which L12 dimers bind in a sequential fashion forming a multimeric L10(L12)X complex.

Functionally, forms part of the ribosomal stalk, playing a central role in the interaction of the ribosome with GTP-bound translation factors. The protein is Large ribosomal subunit protein uL10 of Haemophilus influenzae (strain PittGG).